The chain runs to 136 residues: MPPFFDFLMSAGIAFFVFIISAIILPGFFIWIGLKVVGKERDVLRCGMANFAAVVITAVVAFILHFTPLVLLLPLLAFLIYLYVLKTLLDVGFIEAFAATIIAGVVIFLLAVILLLIFGVWLLFTPPPAQMMHVKF.

Helical transmembrane passes span 10-32 (SAGI…FIWI), 44-66 (LRCG…ILHF), 70-89 (VLLL…KTLL), and 102-124 (IAGV…WLLF).

Its subcellular location is the cell membrane. This is an uncharacterized protein from Archaeoglobus fulgidus (strain ATCC 49558 / DSM 4304 / JCM 9628 / NBRC 100126 / VC-16).